The chain runs to 1061 residues: Eukaryotic translation initiation factor 3 subunit A (1061 aa).

Residues 114–126 (QSSIEATTGSSSV) are compositionally biased toward polar residues. The tract at residues 114–133 (QSSIEATTGSSSVEDLEASE) is disordered. The PCI domain occupies 339-523 (LQKAATFVVL…GVLSFDVDVF (185 aa)). Coiled-coil stretches lie at residues 609–724 (EVIQ…KRLD) and 789–906 (RADL…AAAA). Positions 828 to 901 (REKREREEKE…EAMARRRAEK (74 aa)) are enriched in basic and acidic residues. Residues 828–1061 (REKREREEKE…KYVPKFRREG (234 aa)) form a disordered region. Pro residues-rich tracts occupy residues 950–962 (SGPP…PPPI) and 1000–1011 (APPPERSGPPPR).

It belongs to the eIF-3 subunit A family. Component of the eukaryotic translation initiation factor 3 (eIF-3) complex.

Its subcellular location is the cytoplasm. In terms of biological role, RNA-binding component of the eukaryotic translation initiation factor 3 (eIF-3) complex, which is involved in protein synthesis of a specialized repertoire of mRNAs and, together with other initiation factors, stimulates binding of mRNA and methionyl-tRNAi to the 40S ribosome. The eIF-3 complex specifically targets and initiates translation of a subset of mRNAs involved in cell proliferation. The chain is Eukaryotic translation initiation factor 3 subunit A from Chaetomium globosum (strain ATCC 6205 / CBS 148.51 / DSM 1962 / NBRC 6347 / NRRL 1970) (Soil fungus).